We begin with the raw amino-acid sequence, 42 residues long: uncharacterized protein (42 aa).

Residues 18–38 (VGAISLTVMMILFFIAIVWFL) form a helical membrane-spanning segment.

It localises to the host membrane. This is an uncharacterized protein from His1 virus (isolate Australia/Victoria) (His1V).